The chain runs to 201 residues: Small ribosomal subunit protein uS4c (201 aa).

Residues Gly-20–Tyr-44 form a disordered region. Residues Met-89–Leu-152 enclose the S4 RNA-binding domain.

The protein belongs to the universal ribosomal protein uS4 family. In terms of assembly, part of the 30S ribosomal subunit. Contacts protein S5. The interaction surface between S4 and S5 is involved in control of translational fidelity.

It localises to the plastid. The protein localises to the chloroplast. Its function is as follows. One of the primary rRNA binding proteins, it binds directly to 16S rRNA where it nucleates assembly of the body of the 30S subunit. In terms of biological role, with S5 and S12 plays an important role in translational accuracy. The sequence is that of Small ribosomal subunit protein uS4c (rps4) from Barbarea verna (Land cress).